The following is a 250-amino-acid chain: Probable transcriptional regulatory protein SACE_2018 (250 aa).

Belongs to the TACO1 family.

It is found in the cytoplasm. The protein is Probable transcriptional regulatory protein SACE_2018 of Saccharopolyspora erythraea (strain ATCC 11635 / DSM 40517 / JCM 4748 / NBRC 13426 / NCIMB 8594 / NRRL 2338).